We begin with the raw amino-acid sequence, 484 residues long: UDP-N-acetylmuramate--L-alanine ligase (484 aa).

124 to 130 (GTHGKTT) is an ATP binding site.

The protein belongs to the MurCDEF family.

It localises to the cytoplasm. The catalysed reaction is UDP-N-acetyl-alpha-D-muramate + L-alanine + ATP = UDP-N-acetyl-alpha-D-muramoyl-L-alanine + ADP + phosphate + H(+). It functions in the pathway cell wall biogenesis; peptidoglycan biosynthesis. In terms of biological role, cell wall formation. This chain is UDP-N-acetylmuramate--L-alanine ligase, found in Pseudoalteromonas atlantica (strain T6c / ATCC BAA-1087).